The following is a 602-amino-acid chain: 4-hydroxy-3-methylbut-2-en-1-yl diphosphate synthase (flavodoxin) (602 aa).

Residues Cys-508, Cys-511, Cys-543, and Glu-550 each coordinate [4Fe-4S] cluster.

This sequence belongs to the IspG family. The cofactor is [4Fe-4S] cluster.

The enzyme catalyses (2E)-4-hydroxy-3-methylbut-2-enyl diphosphate + oxidized [flavodoxin] + H2O + 2 H(+) = 2-C-methyl-D-erythritol 2,4-cyclic diphosphate + reduced [flavodoxin]. The protein operates within isoprenoid biosynthesis; isopentenyl diphosphate biosynthesis via DXP pathway; isopentenyl diphosphate from 1-deoxy-D-xylulose 5-phosphate: step 5/6. Functionally, converts 2C-methyl-D-erythritol 2,4-cyclodiphosphate (ME-2,4cPP) into 1-hydroxy-2-methyl-2-(E)-butenyl 4-diphosphate. The sequence is that of 4-hydroxy-3-methylbut-2-en-1-yl diphosphate synthase (flavodoxin) from Chlamydia trachomatis serovar L2 (strain ATCC VR-902B / DSM 19102 / 434/Bu).